The following is a 271-amino-acid chain: MAGPQQQPPYLHLAELTASQFLEIWKHFDADGNGYIEGKELENFFQELEKARKGSGMMSKSDNFGEKMKEFMQKYDKNSDGKIEMAELAQILPTEENFLLCFRQHVGSSAEFMEAWRKYDTDRSGYIEANELKGFLSDLLKKANRPYDEPKLQEYTQTILRMFDLNGDGKLGLSEMSRLLPVQENFLLKFQGMKLTSEEFNAIFTFYDKDRSGYIDEHELDALLKDLYEKNKKEMNIQQLTNYRKSVMSLAEAGKLYRKDLEIVLCSEPPM.

EF-hand domains follow at residues 16 to 51, 63 to 98, 107 to 142, 151 to 186, 195 to 230, and 235 to 270; these read LTAS…LEKA, NFGE…EENF, GSSA…LLKK, KLQE…QENF, LTSE…LYEK, and MNIQ…SEPP. Ca(2+)-binding residues include D29, D31, N33, Y35, E40, D76, N78, D80, K82, E87, D120, D122, S124, Y126, E131, D164, N166, D168, K170, E175, D208, D210, S212, Y214, and E219. Y214 carries the post-translational modification Phosphotyrosine.

The protein belongs to the calbindin family. In terms of tissue distribution, brain.

It localises to the synapse. The protein localises to the cell projection. The protein resides in the dendrite. In terms of biological role, calcium-binding protein involved in calcium homeostasis and signal transduction. It plays a critical role in buffering intracellular calcium levels and modulating calcium-dependent signaling pathways. Predominantly expressed in specific neuronal populations, influences synaptic plasticity and neuronal excitability, contributing to learning and memory. During embryonic development, it facilitates neuronal differentiation and maturation. This is Calretinin from Homo sapiens (Human).